Consider the following 517-residue polypeptide: Maturase K (517 aa).

The protein belongs to the intron maturase 2 family. MatK subfamily.

Its subcellular location is the plastid. It is found in the chloroplast. Functionally, usually encoded in the trnK tRNA gene intron. Probably assists in splicing its own and other chloroplast group II introns. The protein is Maturase K of Phalaenopsis japonica (Orchid).